The primary structure comprises 197 residues: MPKYYCEYCDIYLTHSSPVGRRQHNQGRKHISAKIEYFQNLLREEGITPQNFLGFLGNQGYNNTLANPMMNNFMPGNYNAYMKYNPMRNYHHSNRNSNYQHSIGMHNNKYSRAGYVPPGSNKYPNNHFHNNKRINNIPKPYNNYTNKPITNSSYKNDKQDYRNNNESNDNMNSNNFSNYQVNKENANFVNKNNEQPN.

Residues 4-36 (YYCEYCDIYLTHSSPVGRRQHNQGRKHISAKIE) form a Matrin-type zinc finger. The span at 128-137 (FHNNKRINNI) shows a compositional bias: low complexity. The segment at 128–178 (FHNNKRINNIPKPYNNYTNKPITNSSYKNDKQDYRNNNESNDNMNSNNFSN) is disordered. The segment covering 142–154 (NNYTNKPITNSSY) has biased composition (polar residues). Positions 164–178 (NNESNDNMNSNNFSN) are enriched in low complexity.

The protein belongs to the U1 small nuclear ribonucleoprotein C family. As to quaternary structure, U1 snRNP is composed of the 7 core Sm proteins B/B', D1, D2, D3, E, F and G that assemble in a heptameric protein ring on the Sm site of the small nuclear RNA to form the core snRNP, and at least 3 U1 snRNP-specific proteins U1-70K, U1-A and U1-C. U1-C interacts with U1 snRNA and the 5' splice-site region of the pre-mRNA.

It is found in the nucleus. Functionally, component of the spliceosomal U1 snRNP, which is essential for recognition of the pre-mRNA 5' splice-site and the subsequent assembly of the spliceosome. U1-C is directly involved in initial 5' splice-site recognition for both constitutive and regulated alternative splicing. The interaction with the 5' splice-site seems to precede base-pairing between the pre-mRNA and the U1 snRNA. Stimulates commitment or early (E) complex formation by stabilizing the base pairing of the 5' end of the U1 snRNA and the 5' splice-site region. This Plasmodium berghei (strain Anka) protein is U1 small nuclear ribonucleoprotein C (SNRPC).